We begin with the raw amino-acid sequence, 98 residues long: UPF0358 protein LCA_1078 (98 aa).

It belongs to the UPF0358 family.

This chain is UPF0358 protein LCA_1078, found in Latilactobacillus sakei subsp. sakei (strain 23K) (Lactobacillus sakei subsp. sakei).